Here is a 426-residue protein sequence, read N- to C-terminus: D-cysteine desulfhydrase 1, mitochondrial (426 aa).

The transit peptide at 1–63 (MARGAHQAPG…IGSFLSKRPY (63 aa)) directs the protein to the mitochondrion. Lys-119 is subject to N6-(pyridoxal phosphate)lysine. Catalysis depends on Ser-146, which acts as the Nucleophile.

It belongs to the ACC deaminase/D-cysteine desulfhydrase family. In terms of assembly, homodimer. Pyridoxal 5'-phosphate serves as cofactor. As to expression, present in seeds (at protein level).

The protein localises to the mitochondrion. It carries out the reaction D-cysteine + H2O = hydrogen sulfide + pyruvate + NH4(+) + H(+). Inhibited by L-cysteine (L-cys). In terms of biological role, catalyzes the production of hydrogen sulfide (H2S) from D-cysteine (D-cys). In Oryza sativa subsp. japonica (Rice), this protein is D-cysteine desulfhydrase 1, mitochondrial.